A 428-amino-acid chain; its full sequence is Elongation factor 1-alpha (428 aa).

One can recognise a tr-type G domain in the interval 5–217 (KPHVNIVFIG…DQIPEPEKPV (213 aa)). The G1 stretch occupies residues 14–21 (GHVDHGKS). 14–21 (GHVDHGKS) contacts GTP. Residue Ser21 participates in Mg(2+) binding. A G2 region spans residues 68–72 (GITID). A G3 region spans residues 89–92 (DAPG). GTP-binding positions include 89–93 (DAPGH) and 144–147 (NKMD). Residues 144-147 (NKMD) form a G4 region. The tract at residues 181–183 (SAW) is G5.

The protein belongs to the TRAFAC class translation factor GTPase superfamily. Classic translation factor GTPase family. EF-Tu/EF-1A subfamily.

The protein resides in the cytoplasm. It catalyses the reaction GTP + H2O = GDP + phosphate + H(+). Its function is as follows. GTP hydrolase that promotes the GTP-dependent binding of aminoacyl-tRNA to the A-site of ribosomes during protein biosynthesis. The polypeptide is Elongation factor 1-alpha (Pyrococcus abyssi (strain GE5 / Orsay)).